We begin with the raw amino-acid sequence, 386 residues long: ATP phosphoribosyltransferase regulatory subunit (386 aa).

Belongs to the class-II aminoacyl-tRNA synthetase family. HisZ subfamily. In terms of assembly, heteromultimer composed of HisG and HisZ subunits.

It is found in the cytoplasm. It participates in amino-acid biosynthesis; L-histidine biosynthesis; L-histidine from 5-phospho-alpha-D-ribose 1-diphosphate: step 1/9. Required for the first step of histidine biosynthesis. May allow the feedback regulation of ATP phosphoribosyltransferase activity by histidine. This Variovorax paradoxus (strain S110) protein is ATP phosphoribosyltransferase regulatory subunit.